The following is a 574-amino-acid chain: 2-succinyl-5-enolpyruvyl-6-hydroxy-3-cyclohexene-1-carboxylate synthase (574 aa).

This sequence belongs to the TPP enzyme family. MenD subfamily. As to quaternary structure, homodimer. Mg(2+) is required as a cofactor. It depends on Mn(2+) as a cofactor. The cofactor is thiamine diphosphate.

It carries out the reaction isochorismate + 2-oxoglutarate + H(+) = 5-enolpyruvoyl-6-hydroxy-2-succinyl-cyclohex-3-ene-1-carboxylate + CO2. It participates in quinol/quinone metabolism; 1,4-dihydroxy-2-naphthoate biosynthesis; 1,4-dihydroxy-2-naphthoate from chorismate: step 2/7. Its pathway is quinol/quinone metabolism; menaquinone biosynthesis. Functionally, catalyzes the thiamine diphosphate-dependent decarboxylation of 2-oxoglutarate and the subsequent addition of the resulting succinic semialdehyde-thiamine pyrophosphate anion to isochorismate to yield 2-succinyl-5-enolpyruvyl-6-hydroxy-3-cyclohexene-1-carboxylate (SEPHCHC). This Vibrio atlanticus (strain LGP32) (Vibrio splendidus (strain Mel32)) protein is 2-succinyl-5-enolpyruvyl-6-hydroxy-3-cyclohexene-1-carboxylate synthase.